Reading from the N-terminus, the 98-residue chain is Large ribosomal subunit protein uL23 (98 aa).

This sequence belongs to the universal ribosomal protein uL23 family. As to quaternary structure, part of the 50S ribosomal subunit. Contacts protein L29, and trigger factor when it is bound to the ribosome.

Its function is as follows. One of the early assembly proteins it binds 23S rRNA. One of the proteins that surrounds the polypeptide exit tunnel on the outside of the ribosome. Forms the main docking site for trigger factor binding to the ribosome. The sequence is that of Large ribosomal subunit protein uL23 from Cellvibrio japonicus (strain Ueda107) (Pseudomonas fluorescens subsp. cellulosa).